A 714-amino-acid polypeptide reads, in one-letter code: MAELLIELFMEEIPARMQVRAGEDFRRLVTDRLAAAGIQFQRAEVHTTPRRIALVVEGIPARQADVREERKGPRVGSPEQALQGFLRAAGLTDISQAEQRDTGKGVFYFAVIEKPGGATIDALPALIDGAIRDLPWPKSMRWGTNQFRWVRPLHGILALFDGQVVPGGLTIGTAEPPPETSEGNACLAGEATARVIRYGNETKGHRFLSPDTLTVTSFEDYKAKLRGAHVILDREERKQLILAGARAAAEAEGLVLKDDPGLLEEVAGLVEWPVVLVGGIDEQFMDVPAEVLTTSMRTHQRYFALETTQGKLAPRFVVVANRPTVDGGAAVVAGNERVLRARLSDAKFFWDQDLATPLETRRQALADIKFHEKLGTMLERAERIEALAVEIARTLGLDTGALERVRIAARLCKADLVTGVVGEFPEVQGILGGHVARAQDLPADVADAIADHYRPLGPSDRVPADPVAVAVALADKIDTLVAFFAIDEKPTGSRDPFALRRAALGVIRLIVENGLRASLLPLFGRAAVAVPAAAGETVGGDLLSFFADRLKVALKEKGVRHDLIDAVFGLGGQDDLVLLLKRVDALAGFVASEDGANLLVAYRRAANILRIEEKKDGVSYSGGGIDAGRLEQAEERALAAALDATAADLAPLLAAEDFTGAMRLLSALRGPVDAFFDKVTVNAPDAVLRANRLRLLARIRDTLNGVADFSRIEG.

This sequence belongs to the class-II aminoacyl-tRNA synthetase family. Tetramer of two alpha and two beta subunits.

The protein localises to the cytoplasm. It carries out the reaction tRNA(Gly) + glycine + ATP = glycyl-tRNA(Gly) + AMP + diphosphate. The polypeptide is Glycine--tRNA ligase beta subunit (Rhodospirillum centenum (strain ATCC 51521 / SW)).